The sequence spans 499 residues: Probable folate-biopterin transporter 2 (499 aa).

A run of 12 helical transmembrane segments spans residues 43–63, 92–112, 116–136, 141–161, 185–205, 209–229, 266–286, 302–322, 330–350, 354–374, 399–419, and 435–455; these read WSFV…GGSL, IPWI…IFGF, PYFI…SLHS, YLAL…DVTI, LSSS…VHLV, GVFG…IVFS, LYMY…FYWF, FILS…QLVL, LCLW…ILVF, LKFG…SQMI, FALL…LGGI, and WLAV…LFLV.

This sequence belongs to the major facilitator superfamily. Folate-biopterin transporter (TC 2.A.71) family.

The protein resides in the membrane. In terms of biological role, could mediate folate transport. The polypeptide is Probable folate-biopterin transporter 2 (Arabidopsis thaliana (Mouse-ear cress)).